The sequence spans 331 residues: NmrA-like family domain-containing oxidoreductase himF (331 aa).

Residues 8 to 13, 34 to 38, 55 to 56, 76 to 78, Lys133, and 155 to 167 each bind NADP(+); these read GATGNQ, RNAES, DG, TNG, and WFFE…QMAA.

It belongs to the NmrA-type oxidoreductase family.

Its pathway is secondary metabolite biosynthesis. NmrA-like family domain-containing oxidoreductase; part of the him gene cluster that mediates the biosynthesis of himeic acid A, a ubiquitin-activating enzyme (E1) inhibitor. First, himA, together with the trans-enoyl reductase himH, catalyzes the formation of apolyketide chain, which is then condensed with leucine by the NRPS activity of himA. Dieckmann cyclization and release from himA gives a tetramic acid intermediate as the product of himA PKS-NRPS. HimG then catalyzes alpha-oxidation of the tetramic acid ring, with a subsequent rearrangement to yield apyrone intermediate. Two terminal methyl groups of polyketide and amide side chains are oxidized to carboxylic acids by himC cytochrome P450 monooxygenase to form himeic acid A. Himeic acid A is further converted to himeic acid B and C during culture growth. No gene responsible for pyrone to pyridone conversion was found in the him gene cluster and himeic acid A is non-enzymatically converted to himeic acid C by the incorporation of an ammonium nitrogen atom in a pH5 buffer, and to himeic acid B at a conversion ratio of 50% during incubation in MeOH for 5 days. This chain is NmrA-like family domain-containing oxidoreductase himF, found in Aspergillus japonicus.